The sequence spans 109 residues: Putative double-stranded DNA mimic protein YciU (109 aa).

This sequence belongs to the putative dsDNA mimic protein family.

Its function is as follows. May act as a double-stranded DNA (dsDNA) mimic. Probably regulates the activity of a dsDNA-binding protein. This chain is Putative double-stranded DNA mimic protein YciU, found in Salmonella choleraesuis (strain SC-B67).